The chain runs to 157 residues: Nascent polypeptide-associated complex subunit beta (157 aa).

The interval 1–28 (MPVDPEKLAKLQKSSAKKVGGSRVKAKK) is disordered. In terms of domain architecture, NAC-A/B spans 33-98 (EQDDTKLIEA…PQEKNITQLI (66 aa)). The disordered stretch occupies residues 124–157 (KTPKDFNTGSANAAADAGGEDIPDLVDQKFDDVE).

This sequence belongs to the NAC-beta family. Part of the nascent polypeptide-associated complex (NAC), consisting of EGD2 and EGD1. NAC associates with ribosomes via EGD1.

Its subcellular location is the cytoplasm. It is found in the nucleus. Component of the nascent polypeptide-associated complex (NAC), a dynamic component of the ribosomal exit tunnel, protecting the emerging polypeptides from interaction with other cytoplasmic proteins to ensure appropriate nascent protein targeting. The NAC complex also promotes mitochondrial protein import by enhancing productive ribosome interactions with the outer mitochondrial membrane and blocks the inappropriate interaction of ribosomes translating non-secretory nascent polypeptides with translocation sites in the membrane of the endoplasmic reticulum. EGD1 may act as a transcription factor that exert a negative effect on the expression of several genes that are transcribed by RNA polymerase II. The protein is Nascent polypeptide-associated complex subunit beta (EGD1) of Candida albicans (strain SC5314 / ATCC MYA-2876) (Yeast).